Consider the following 494-residue polypeptide: Folate-biopterin transporter (494 aa).

Helical transmembrane passes span 31–51 (APSW…VLGL), 64–84 (LGLS…PWIL), 104–124 (SYLW…AAWV), 133–153 (VLLF…SLVV), 170–190 (LTWG…GALL), 197–217 (TVFA…FLIS), 246–266 (ILLP…ESAF), 284–303 (VRLV…QRFL), 310–330 (VIMG…LILI), 346–366 (LGDS…VLVL), 375–395 (IEAT…VLSF), and 415–435 (LALL…FLGL). The interval 441–461 (PQVKDKTEKEDNPDDPGDRLV) is disordered.

Belongs to the major facilitator superfamily. Folate-biopterin transporter (TC 2.A.71) family.

It localises to the cell membrane. In terms of biological role, mediates folate monoglutamate transport involved in tetrahydrofolate biosynthesis. It also mediates transport of antifolates, such as methotrexate and aminopterin. The chain is Folate-biopterin transporter from Synechocystis sp. (strain ATCC 27184 / PCC 6803 / Kazusa).